Reading from the N-terminus, the 186-residue chain is ATP synthase subunit delta (186 aa).

It belongs to the ATPase delta chain family. In terms of assembly, F-type ATPases have 2 components, F(1) - the catalytic core - and F(0) - the membrane proton channel. F(1) has five subunits: alpha(3), beta(3), gamma(1), delta(1), epsilon(1). F(0) has three main subunits: a(1), b(2) and c(10-14). The alpha and beta chains form an alternating ring which encloses part of the gamma chain. F(1) is attached to F(0) by a central stalk formed by the gamma and epsilon chains, while a peripheral stalk is formed by the delta and b chains.

It localises to the cell inner membrane. In terms of biological role, f(1)F(0) ATP synthase produces ATP from ADP in the presence of a proton or sodium gradient. F-type ATPases consist of two structural domains, F(1) containing the extramembraneous catalytic core and F(0) containing the membrane proton channel, linked together by a central stalk and a peripheral stalk. During catalysis, ATP synthesis in the catalytic domain of F(1) is coupled via a rotary mechanism of the central stalk subunits to proton translocation. Its function is as follows. This protein is part of the stalk that links CF(0) to CF(1). It either transmits conformational changes from CF(0) to CF(1) or is implicated in proton conduction. This chain is ATP synthase subunit delta, found in Fuscovulum blasticum (Rhodobacter blasticus).